The primary structure comprises 81 residues: ATP synthase subunit c, chloroplastic (81 aa).

2 consecutive transmembrane segments (helical) span residues 3–23 (PLIA…ASIG) and 57–77 (LAFM…LLFA).

The protein belongs to the ATPase C chain family. In terms of assembly, F-type ATPases have 2 components, F(1) - the catalytic core - and F(0) - the membrane proton channel. F(1) has five subunits: alpha(3), beta(3), gamma(1), delta(1), epsilon(1). F(0) has four main subunits: a(1), b(1), b'(1) and c(10-14). The alpha and beta chains form an alternating ring which encloses part of the gamma chain. F(1) is attached to F(0) by a central stalk formed by the gamma and epsilon chains, while a peripheral stalk is formed by the delta, b and b' chains.

It is found in the plastid. The protein resides in the chloroplast thylakoid membrane. Its function is as follows. F(1)F(0) ATP synthase produces ATP from ADP in the presence of a proton or sodium gradient. F-type ATPases consist of two structural domains, F(1) containing the extramembraneous catalytic core and F(0) containing the membrane proton channel, linked together by a central stalk and a peripheral stalk. During catalysis, ATP synthesis in the catalytic domain of F(1) is coupled via a rotary mechanism of the central stalk subunits to proton translocation. Functionally, key component of the F(0) channel; it plays a direct role in translocation across the membrane. A homomeric c-ring of between 10-14 subunits forms the central stalk rotor element with the F(1) delta and epsilon subunits. The chain is ATP synthase subunit c, chloroplastic from Pisum sativum (Garden pea).